We begin with the raw amino-acid sequence, 67 residues long: Large ribosomal subunit protein uL29 (67 aa).

The protein belongs to the universal ribosomal protein uL29 family.

This chain is Large ribosomal subunit protein uL29, found in Clostridioides difficile (strain 630) (Peptoclostridium difficile).